Here is a 342-residue protein sequence, read N- to C-terminus: Foldase protein PrsA (342 aa).

Positions 1–20 (MKKKLILAAAGAMAVFSLAA) are cleaved as a signal peptide. Cys-21 carries the N-palmitoyl cysteine lipid modification. The S-diacylglycerol cysteine moiety is linked to residue Cys-21. The PpiC domain maps to 142–235 (HPEVEAQIIQ…QTYQTTYYVV (94 aa)). Positions 297 to 342 (MQTESSSASSEKKESKSSDSKTSDTKTSDSEKATDSSSKTTESSSK) are disordered. Residues 306-330 (SEKKESKSSDSKTSDTKTSDSEKAT) show a composition bias toward basic and acidic residues. The span at 331 to 342 (DSSSKTTESSSK) shows a compositional bias: low complexity.

Belongs to the PrsA family.

The protein resides in the cell membrane. It catalyses the reaction [protein]-peptidylproline (omega=180) = [protein]-peptidylproline (omega=0). Functionally, plays a major role in protein secretion by helping the post-translocational extracellular folding of several secreted proteins. The chain is Foldase protein PrsA from Enterococcus faecalis (strain ATCC 700802 / V583).